A 115-amino-acid polypeptide reads, in one-letter code: Ig heavy chain V region PJ14 (115 aa).

Residues 1–19 (MAVLALLFCLVTFPSCILS) form the signal peptide. Residues 20–115 (QVQLKESGPG…TDDTARYYCA (96 aa)) enclose the Ig-like domain.

This chain is Ig heavy chain V region PJ14, found in Mus musculus (Mouse).